The following is a 177-amino-acid chain: Bifunctional protein PyrR (177 aa).

The PRPP-binding motif lies at 99 to 111; that stretch reads VVLVDDVLFTGRT.

This sequence belongs to the purine/pyrimidine phosphoribosyltransferase family. PyrR subfamily.

It catalyses the reaction UMP + diphosphate = 5-phospho-alpha-D-ribose 1-diphosphate + uracil. Functionally, regulates the transcription of the pyrimidine nucleotide (pyr) operon in response to exogenous pyrimidines. In terms of biological role, also displays a weak uracil phosphoribosyltransferase activity which is not physiologically significant. This chain is Bifunctional protein PyrR, found in Geobacter sulfurreducens (strain ATCC 51573 / DSM 12127 / PCA).